Reading from the N-terminus, the 209-residue chain is Thymidylate kinase (209 aa).

10 to 17 (GLDGAGKS) contacts ATP.

Belongs to the thymidylate kinase family.

The enzyme catalyses dTMP + ATP = dTDP + ADP. Functionally, phosphorylation of dTMP to form dTDP in both de novo and salvage pathways of dTTP synthesis. The protein is Thymidylate kinase of Francisella tularensis subsp. holarctica (strain OSU18).